The following is a 486-amino-acid chain: Betaine aldehyde dehydrogenase (486 aa).

K(+)-binding residues include T23 and D90. 147-149 (GAW) lines the NAD(+) pocket. The active-site Charge relay system is the K159. Residues 173–176 (KPSE) and 226–229 (ESGT) contribute to the NAD(+) site. L241 lines the K(+) pocket. E247 acts as the Proton acceptor in catalysis. NAD(+) is bound by residues G249, C281, and E382. C281 acts as the Nucleophile in catalysis. The residue at position 281 (C281) is a Cysteine sulfenic acid (-SOH). Positions 452 and 455 each coordinate K(+). The active-site Charge relay system is E459.

The protein belongs to the aldehyde dehydrogenase family. In terms of assembly, dimer of dimers. The cofactor is K(+).

The enzyme catalyses betaine aldehyde + NAD(+) + H2O = glycine betaine + NADH + 2 H(+). It participates in amine and polyamine biosynthesis; betaine biosynthesis via choline pathway; betaine from betaine aldehyde: step 1/1. In terms of biological role, involved in the biosynthesis of the osmoprotectant glycine betaine. Catalyzes the irreversible oxidation of betaine aldehyde to the corresponding acid. The protein is Betaine aldehyde dehydrogenase of Vibrio vulnificus (strain YJ016).